Here is a 656-residue protein sequence, read N- to C-terminus: FAST kinase domain-containing protein 3, mitochondrial (656 aa).

The RAP domain occupies 587-645 (VALCIDGPQRFCLGSKHLLGKEAIKQRHLRLLGYQVVQVPYHELELLTSRLELVDYLQR).

This sequence belongs to the FAST kinase family.

It is found in the mitochondrion. In terms of biological role, required for normal mitochondrial respiration. Increases steady-state levels and half-lives of a subset of mature mitochondrial mRNAs MT-ND2, MT-ND3, MT-CYTB, MT-CO2, and MT-ATP8/6. Promotes MT-CO1 mRNA translation and increases mitochondrial complex IV assembly and activity. This chain is FAST kinase domain-containing protein 3, mitochondrial (Fastkd3), found in Rattus norvegicus (Rat).